The following is a 254-amino-acid chain: Mantle protein (254 aa).

The signal sequence occupies residues 1 to 16 (MLAVLLFAALVATAYS).

In terms of tissue distribution, prismatic layer of shell (at protein level). Expressed primarily in the mantle with highest level in the outer epithelium of the mantle edge and lower level in the mantle pallium.

It is found in the secreted. This is Mantle protein from Margaritifera margaritifera (Freshwater pearl mussel).